The sequence spans 327 residues: Aspartate--ammonia ligase (327 aa).

It belongs to the class-II aminoacyl-tRNA synthetase family. AsnA subfamily.

It is found in the cytoplasm. The catalysed reaction is L-aspartate + NH4(+) + ATP = L-asparagine + AMP + diphosphate + H(+). It participates in amino-acid biosynthesis; L-asparagine biosynthesis; L-asparagine from L-aspartate (ammonia route): step 1/1. The protein is Aspartate--ammonia ligase of Bacillus cereus (strain AH187).